We begin with the raw amino-acid sequence, 317 residues long: Peroxidase 22.3 (317 aa).

An N-terminal signal peptide occupies residues 1–25; sequence MASATNSSLSLMLLVAAAMASVASA. A Pyrrolidone carboxylic acid modification is found at Gln26. Cystine bridges form between Cys36-Cys111 and Cys69-Cys74. His67 functions as the Proton acceptor in the catalytic mechanism. Asp68, Val71, Gly73, Asp75, and Ser77 together coordinate Ca(2+). Asn112 carries N-linked (GlcNAc...) asparagine glycosylation. 2 cysteine pairs are disulfide-bonded: Cys117-Cys312 and Cys196-Cys221. Residue Pro159 participates in substrate binding. Asn171 is a glycosylation site (N-linked (GlcNAc...) asparagine). A heme b-binding site is contributed by His189. Thr190 contributes to the Ca(2+) binding site. N-linked (GlcNAc...) asparagine glycosylation occurs at Asn205. Residues Asp236, Thr239, and Asp244 each coordinate Ca(2+).

This sequence belongs to the peroxidase family. Classical plant (class III) peroxidase subfamily. Heme b is required as a cofactor. The cofactor is Ca(2+).

It localises to the secreted. The enzyme catalyses H2O2 + AH2 = A + 2 H2O. Removal of H(2)O(2), oxidation of toxic reductants, biosynthesis and degradation of lignin, suberization, auxin catabolism, response to environmental stresses such as wounding, pathogen attack and oxidative stress. These functions might be dependent on each isozyme/isoform in each plant tissue. This chain is Peroxidase 22.3, found in Oryza sativa subsp. japonica (Rice).